The sequence spans 93 residues: Small ribosomal subunit protein uS19 (93 aa).

Belongs to the universal ribosomal protein uS19 family.

Protein S19 forms a complex with S13 that binds strongly to the 16S ribosomal RNA. The sequence is that of Small ribosomal subunit protein uS19 from Renibacterium salmoninarum (strain ATCC 33209 / DSM 20767 / JCM 11484 / NBRC 15589 / NCIMB 2235).